Consider the following 1116-residue polypeptide: uncharacterized protein (1116 aa).

A BNR 1 repeat occupies 21–32 (FISRDGGLTWRF). N-linked (GlcNAc...) asparagine glycosylation is present at N35. BNR repeat units follow at residues 67–78 (YYSLDQGRTWNE) and 307–318 (YISHDGGQTIKR). The N-linked (GlcNAc...) asparagine glycan is linked to N336. One copy of the BNR 4 repeat lies at 404-415 (YLTKDGGETFTE). N553 carries an N-linked (GlcNAc...) asparagine glycan. 3 BNR repeats span residues 607-618 (KITFNDGSDWNF), 686-697 (FLTTDGGETWTE), and 727-738 (SYSTDFGKTWKD). N846 carries an N-linked (GlcNAc...) asparagine glycan. Residues 934–957 (INTGAYALVFVTILLVIFFAAWFV) traverse the membrane as a helical segment. N985 carries an N-linked (GlcNAc...) asparagine glycan. The tract at residues 1069 to 1116 (IEQEDAYRPEQEHTSQIDQPATSNIPDALPARSAIHKPDSTAVRNEDE) is disordered. Over residues 1073–1083 (DAYRPEQEHTS) the composition is skewed to basic and acidic residues. The segment covering 1084-1093 (QIDQPATSNI) has biased composition (polar residues).

The protein resides in the membrane. This is an uncharacterized protein from Saccharomyces cerevisiae (strain ATCC 204508 / S288c) (Baker's yeast).